Here is a 359-residue protein sequence, read N- to C-terminus: Photosystem II protein D1 1 (359 aa).

The next 3 membrane-spanning stretches (helical) occupy residues 29–46 (YVGWFGVLMIPTLLAATT), 118–133 (HFLIGIYAYMGREWEL), and 142–156 (WICIAYSAPVAAASA). His118 is a chlorophyll a binding site. Pheophytin a is bound at residue Tyr126. Residues Asp170 and Glu189 each contribute to the [CaMn4O5] cluster site. A helical membrane pass occupies residues 197–218 (FHMLGVAGVFGGSLFSAMHGSL). His198 lines the chlorophyll a pocket. A quinone contacts are provided by residues His215 and 264–265 (SF). Residue His215 participates in Fe cation binding. Fe cation is bound at residue His272. The chain crosses the membrane as a helical span at residues 274–288 (FLAAWPVVGIWFTAL). 4 residues coordinate [CaMn4O5] cluster: His332, Glu333, Asp342, and Ala344. Residues 345-359 (AAESAPVALQAPAIG) constitute a propeptide that is removed on maturation.

It belongs to the reaction center PufL/M/PsbA/D family. In terms of assembly, PSII is composed of 1 copy each of membrane proteins PsbA, PsbB, PsbC, PsbD, PsbE, PsbF, PsbH, PsbI, PsbJ, PsbK, PsbL, PsbM, PsbT, PsbX, PsbY, PsbZ, Psb30/Ycf12, peripheral proteins PsbO, CyanoQ (PsbQ), PsbU, PsbV and a large number of cofactors. It forms dimeric complexes. It depends on The D1/D2 heterodimer binds P680, chlorophylls that are the primary electron donor of PSII, and subsequent electron acceptors. It shares a non-heme iron and each subunit binds pheophytin, quinone, additional chlorophylls, carotenoids and lipids. D1 provides most of the ligands for the Mn4-Ca-O5 cluster of the oxygen-evolving complex (OEC). There is also a Cl(-1) ion associated with D1 and D2, which is required for oxygen evolution. The PSII complex binds additional chlorophylls, carotenoids and specific lipids. as a cofactor. Post-translationally, tyr-161 forms a radical intermediate that is referred to as redox-active TyrZ, YZ or Y-Z. In terms of processing, C-terminally processed by CtpA; processing is essential to allow assembly of the oxygen-evolving complex and thus photosynthetic growth.

The protein resides in the cellular thylakoid membrane. The catalysed reaction is 2 a plastoquinone + 4 hnu + 2 H2O = 2 a plastoquinol + O2. Its function is as follows. Photosystem II (PSII) is a light-driven water:plastoquinone oxidoreductase that uses light energy to abstract electrons from H(2)O, generating O(2) and a proton gradient subsequently used for ATP formation. It consists of a core antenna complex that captures photons, and an electron transfer chain that converts photonic excitation into a charge separation. The D1/D2 (PsbA/PsbD) reaction center heterodimer binds P680, the primary electron donor of PSII as well as several subsequent electron acceptors. In Synechococcus sp. (strain RCC307), this protein is Photosystem II protein D1 1.